The sequence spans 510 residues: Proline--tRNA ligase 2 (510 aa).

Belongs to the class-II aminoacyl-tRNA synthetase family. ProS type 3 subfamily. Homodimer.

Its subcellular location is the cytoplasm. It carries out the reaction tRNA(Pro) + L-proline + ATP = L-prolyl-tRNA(Pro) + AMP + diphosphate. Functionally, catalyzes the attachment of proline to tRNA(Pro) in a two-step reaction: proline is first activated by ATP to form Pro-AMP and then transferred to the acceptor end of tRNA(Pro). The protein is Proline--tRNA ligase 2 of Anaeromyxobacter dehalogenans (strain 2CP-C).